Consider the following 1452-residue polypeptide: ABC multidrug transporter A (1452 aa).

The interval 1 to 20 (MNESHEAGKNSSTNVEEREE) is disordered. N-linked (GlcNAc...) asparagine glycosylation is found at Asn2, Asn10, Asn228, Asn287, and Asn311. An ABC transporter 1 domain is found at 110-363 (LKTLSLARIA…FLQMGFVCPD (254 aa)). The next 6 membrane-spanning stretches (helical) occupy residues 474 to 494 (VTIS…SIFY), 508 to 528 (ALLF…MLTL), 554 to 574 (MIMD…VLYF), 583 to 603 (GAFF…SMFF), 616 to 636 (VLPF…FAIP), and 725 to 745 (IGVI…ATDF). In terms of domain architecture, ABC transporter 2 spans 802–1044 (FQWKDVCFDI…ILIDYFVRNG (243 aa)). Residue 838–845 (GVSGAGKT) participates in ATP binding. Helical transmembrane passes span 1153-1173 (ALCV…PNTI), 1183-1203 (IFML…HFVA), 1223-1243 (FLIA…VLMF), 1271-1291 (LMIW…IAAF), and 1297-1317 (AGNL…VLAT). 3 N-linked (GlcNAc...) asparagine glycosylation sites follow: Asn1350, Asn1365, and Asn1391. A helical transmembrane segment spans residues 1418–1438 (FGLMWVFIVFNIFAACSLYWW).

Belongs to the ABC transporter superfamily. ABCG family. PDR (TC 3.A.1.205) subfamily.

The protein localises to the membrane. ABC transporter that seems not to be involved in the efflux of toxic substances, at least not the classical compounds such as itraconazole, amphotericin B, voriconazole, posaconazole, ravuconazole, or echinocandins. This Aspergillus fumigatus (Neosartorya fumigata) protein is ABC multidrug transporter A.